The primary structure comprises 275 residues: Undecaprenyl-diphosphatase (275 aa).

Transmembrane regions (helical) follow at residues 1–21, 42–62, 80–100, 107–127, 147–167, 184–204, 214–234, and 249–269; these read MDWV…FLPI, VKDA…LVYY, TLWT…LAFG, LFKP…MWLI, SLLI…SRSA, TKFS…LNLV, IGLL…YLAI, and FAVY…TGVM.

The protein belongs to the UppP family.

Its subcellular location is the cell membrane. It carries out the reaction di-trans,octa-cis-undecaprenyl diphosphate + H2O = di-trans,octa-cis-undecaprenyl phosphate + phosphate + H(+). Its function is as follows. Catalyzes the dephosphorylation of undecaprenyl diphosphate (UPP). Confers resistance to bacitracin. This is Undecaprenyl-diphosphatase from Deinococcus deserti (strain DSM 17065 / CIP 109153 / LMG 22923 / VCD115).